Consider the following 119-residue polypeptide: Holo-[acyl-carrier-protein] synthase (119 aa).

Positions 8 and 59 each coordinate Mg(2+).

The protein belongs to the P-Pant transferase superfamily. AcpS family. Mg(2+) serves as cofactor.

The protein resides in the cytoplasm. It catalyses the reaction apo-[ACP] + CoA = holo-[ACP] + adenosine 3',5'-bisphosphate + H(+). Its function is as follows. Transfers the 4'-phosphopantetheine moiety from coenzyme A to a Ser of acyl-carrier-protein. The sequence is that of Holo-[acyl-carrier-protein] synthase from Streptococcus agalactiae serotype Ia (strain ATCC 27591 / A909 / CDC SS700).